Consider the following 569-residue polypeptide: MEFLPEPQHPPGPPTMDLEEPKGPEVPSEDHPSNTQWALGPRGPDTLSEMELDTSSVRALVQQLEALPSDLGGQFPDGAPCPLHIATGQGLATQENLDAGGLLSAEAGGDNLLGLLRCEASLPAQSVPPDPAQAAPRLLQPPEDPGGDPGWMEGTEPADNRSSSSSPELWLETAPLVTHRDPPVGTQSQETLASCPAVSEVPGPCGQEELMDGVLFGAKYLGSTQLLSERNPPPSTRMGQAQEAMDRVKAPEGETQPMTEVDIFISTKRVKVLAADSQDALMDHALQTISYIADIGPVLVLMARRRLAKRTTSQDRQRQLYKMLCHVFHSEDAQLIAQAIGQAFSIAYSQFLQENRIDPSQVGMQPSASASHPHNGDLDHFCNSQNCREVCIQKRPGEGLGVALVESGWGSLLPTAVIANLLHGGPAERCGALSIGDRVTAINGTSLVGLSLAACQAAVREVRRHSSVTLSIIHCPPVTTAVIHRPHVREQLGFCVENGIICSLLRGSAAERGGVRVGHRIIEVNGQSVVAMPHARIIQLLTETREIHIKTMPAATYRLLTGQEQPVYL.

Position 1 is an N-acetylmethionine (Met-1). Disordered stretches follow at residues 1–53 (MEFL…MELD) and 124–168 (AQSV…SSPE). Residues 19–32 (EEPKGPEVPSEDHP) are compositionally biased toward basic and acidic residues. Low complexity predominate over residues 132–141 (AQAAPRLLQP). A phosphoserine mark is found at Ser-166 and Ser-367. Residues 212 to 376 (DGVLFGAKYL…SASASHPHNG (165 aa)) enclose the PID domain. PDZ domains lie at 389–475 (EVCI…IIHC) and 480–554 (TAVI…TMPA).

In terms of assembly, binds to the cytoplasmic domain of amyloid protein (APP). Interacts with HIF1AN (via N-terminus). Interacts with NECAB3; seems to mediate the interaction between NECAB3 and HIF1AN. Ubiquitous.

It is found in the cytoplasm. Its subcellular location is the perinuclear region. May modulate processing of the amyloid-beta precursor protein (APP) and hence formation of APP-beta. May enhance the activity of HIF1A in macrophages by inhibiting the activity of HIF1AN. This Rattus norvegicus (Rat) protein is Amyloid-beta A4 precursor protein-binding family A member 3 (Apba3).